Reading from the N-terminus, the 751-residue chain is Amyloid-beta precursor protein (751 aa).

The N-terminal stretch at 1-17 is a signal peptide; that stretch reads MLPGLALLLLAAWTARA. Over 18 to 682 the chain is Extracellular; that stretch reads LEVPTDGNAG…AEDVGSNKGA (665 aa). The interval 28-123 is GFLD subdomain; sequence LLAEPQIAMF…PYRCLVGEFV (96 aa). The 162-residue stretch at 28 to 189 folds into the E1 domain; that stretch reads LLAEPQIAMF…RGVEFVCCPL (162 aa). Cystine bridges form between cysteine 38-cysteine 62, cysteine 73-cysteine 117, cysteine 98-cysteine 105, cysteine 133-cysteine 187, cysteine 144-cysteine 174, and cysteine 158-cysteine 186. 96–110 contacts heparin; it reads NWCKRDRKQCKTHPH. The segment at 131 to 189 is cuBD subdomain; sequence DKCKFLHQERMDVCETHLHWHTVAKETCSEKSTNLHDYGMLLPCGIDKFRGVEFVCCPL. Histidine 147, histidine 151, and tyrosine 168 together coordinate Cu(2+). The zinc-binding stretch occupies residues 181–188; that stretch reads GVEFVCCP. 3 residues coordinate Zn(2+): glutamate 183, cysteine 186, and cysteine 187. Positions 195 to 284 are disordered; that stretch reads HVDSADAEED…TTTTTTESVE (90 aa). A phosphoserine; by CK1 and CK2 mark is found at serine 198 and serine 206. 2 positions are modified to sulfotyrosine: tyrosine 217 and tyrosine 262. The segment covering 228–264 has biased composition (acidic residues); that stretch reads VAEEEEVAEVEEEEADDDEDDEDGDEVEEEAEEPYEE. Residues 268-281 show a composition bias toward low complexity; that stretch reads RTTSIATTTTTTTE. Disulfide bonds link cysteine 291–cysteine 341, cysteine 300–cysteine 324, and cysteine 316–cysteine 337. Residues 291 to 341 enclose the BPTI/Kunitz inhibitor domain; that stretch reads CSEQAETGPCRAMISRWYFDVTEGKCAPFFYGGCGGNRNNFDTEEYCMAVC. Heparin-binding stretches follow at residues 316–344 and 363–428; these read CAPF…CGSV and PGDE…QEAA. Position 336 is a sulfotyrosine (tyrosine 336). The short motif at 344–346 is the OX-2 element; the sequence is VIP. One can recognise an E2 domain in the interval 355-546; it reads AVDKYLETPG…EEIQDEVDEL (192 aa). Serine 422 carries the phosphoserine modification. Residue tyrosine 478 is modified to Phosphotyrosine. The tract at residues 504-521 is collagen-binding; sequence AAQIRSQVMTHLRVIYER. 2 N-linked (GlcNAc...) asparagine glycosylation sites follow: asparagine 523 and asparagine 552. Cu(2+) is bound by residues histidine 658, tyrosine 662, histidine 665, and histidine 666. Zn(2+)-binding residues include histidine 658, tyrosine 662, histidine 665, and histidine 666. The segment at 676–703 is interaction with PSEN1; it reads VGSNKGAIIGLMVGGVVIATVIVITLVM. Residues 683–703 form a helical membrane-spanning segment; the sequence is IIGLMVGGVVIATVIVITLVM. Over 704-751 the chain is Cytoplasmic; the sequence is LKKKQYTSIHHGVVEVDAAVTPEERHLSKMQQNGYENPTYKFFEQMQN. The short motif at 705-715 is the Basolateral sorting signal element; it reads KKKQYTSIHHG. Position 710 is a phosphothreonine (threonine 710). Serine 711 is subject to Phosphoserine; by APP-kinase I. The segment at 713 to 732 is interaction with G(o)-alpha; that stretch reads HHGVVEVDAAVTPEERHLSK. At threonine 724 the chain carries Phosphothreonine; by CDK5 and MAPK10. Residues 737–751 form a required for the interaction with KIF5B and for anterograde transport in axons region; that stretch reads GYENPTYKFFEQMQN. Tyrosine 738 bears the Phosphotyrosine; by ABL1 mark. The YENPXY motif; contains endocytosis signal motif lies at 738-743; it reads YENPTY. Lysine 744 participates in a covalent cross-link: Glycyl lysine isopeptide (Lys-Gly) (interchain with G-Cter in ubiquitin).

The protein belongs to the APP family. As to quaternary structure, binds, via its C-terminus, to the PID domain of several cytoplasmic proteins, including APBB family members, the APBA family, MAPK8IP1, SHC1 and NUMB and DAB1. Binding to DAB1 inhibits its serine phosphorylation. Interacts (via NPXY motif) with DAB2 (via PID domain); the interaction is impaired by tyrosine phosphorylation of the NPXY motif. Also interacts with GPCR-like protein BPP, APPBP1, IB1, KNS2 (via its TPR domains), APPBP2 (via BaSS) and DDB1. In vitro, it binds MAPT via the MT-binding domains. Associates with microtubules in the presence of ATP and in a kinesin-dependent manner. Interacts, through a C-terminal domain, with GNAO1. Amyloid-beta protein 42 binds CHRNA7 in hippocampal neurons. Amyloid-beta associates with HADH2. Interacts with CPEB1, ANKS1B and AGER. Interacts with ITM2B. Interacts with ITM2C. Interacts with IDE. Can form homodimers; dimerization is enhanced in the presence of Cu(2+) ions. Can form homodimers; this is promoted by heparin binding. Amyloid-beta protein 40 interacts with S100A9. CTF-alpha product of APP interacts with GSAP. Isoform APP695 interacts with SORL1 (via N-terminal ectodomain); this interaction retains APP in the trans-Golgi network and reduces processing into soluble APP-alpha and amyloid-beta peptides. Isoform APP770 interacts with SORL1. The C99 fragment also interacts with SORL1. Interacts with PLD3. Interacts with VDAC1. Interacts with NSG1; could regulate APP processing. Amyloid-beta protein 42 interacts with FPR2. Interacts (via transmembrane region) with PSEN1; the interaction is direct. Interacts with LRRK2. Interacts (via cytoplasmic domain) with KIF5B. Interacts (via C-terminus) with APBB2/FE65L1 (via C-terminus). Interacts (via intracellular domain) with APBB3. Proteolytically processed under normal cellular conditions. Cleavage either by alpha-secretase, beta-secretase or theta-secretase leads to generation and extracellular release of soluble APP peptides, S-APP-alpha and S-APP-beta, and the retention of corresponding membrane-anchored C-terminal fragments, C80, C83 and C99. Subsequent processing of C80 and C83 by gamma-secretase yields P3 peptides. This is the major secretory pathway and is non-amyloidogenic. Alternatively, presenilin/nicastrin-mediated gamma-secretase processing of C99 releases the amyloid-beta proteins, amyloid-beta protein 40 and amyloid-beta protein 42, major components of amyloid plaques, and the cytotoxic C-terminal fragments, gamma-CTF(50), gamma-CTF(57) and gamma-CTF(59). PSEN1 cleavage is more efficient with C83 than with C99 as substrate (in vitro). Amyloid-beta protein 40 and Amyloid-beta protein 42 are cleaved by ACE. Many other minor amyloid-beta peptides, amyloid-beta 1-X peptides, are found in cerebral spinal fluid (CSF) including the amyloid-beta X-15 peptides, produced from the cleavage by alpha-secretase. In terms of processing, proteolytically cleaved by caspases during neuronal apoptosis. Cleavage at Asp-720 by either caspase-3, -8 or -9 results in the production of the neurotoxic C31 peptide and the increased production of amyloid-beta peptides. Post-translationally, N- and O-glycosylated. Phosphorylation in the C-terminal on tyrosine, threonine and serine residues is neuron-specific. Phosphorylation can affect APP processing, neuronal differentiation and interaction with other proteins. Phosphorylated on Thr-724 in neuronal cells by Cdc5 kinase and Mapk10, in dividing cells by Cdc2 kinase in a cell-cycle dependent manner with maximal levels at the G2/M phase and, in vitro, by GSK-3-beta. The Thr-724 phosphorylated form causes a conformational change which reduces binding of Fe65 family members. In dopaminergic (DA) neurons, phosphorylation on Thr-724 by LRKK2 promotes the production and the nuclear translocation of the APP intracellular domain (AICD) which induces DA neuron apoptosis. Phosphorylation on Tyr-738 is required for SHC binding. Phosphorylated in the extracellular domain by casein kinases on both soluble and membrane-bound APP. This phosphorylation is inhibited by heparin. In terms of processing, trophic-factor deprivation triggers the cleavage of surface APP by beta-secretase to release sAPP-beta which is further cleaved to release an N-terminal fragment of APP (N-APP). Post-translationally, amyloid-beta peptides are degraded by IDE. Sulfated on tyrosine residues.

The protein localises to the cell membrane. It localises to the membrane. The protein resides in the perikaryon. It is found in the cell projection. Its subcellular location is the growth cone. The protein localises to the clathrin-coated pit. It localises to the early endosome. The protein resides in the cytoplasmic vesicle. It is found in the endoplasmic reticulum. Its subcellular location is the golgi apparatus. The protein localises to the secreted. It localises to the cell surface. The protein resides in the nucleus. It is found in the cytoplasm. Functionally, functions as a cell surface receptor and performs physiological functions on the surface of neurons relevant to neurite growth, neuronal adhesion and axonogenesis. Interaction between APP molecules on neighboring cells promotes synaptogenesis. Involved in cell mobility and transcription regulation through protein-protein interactions. Can promote transcription activation through binding to APBB1-KAT5 and inhibit Notch signaling through interaction with Numb. Couples to apoptosis-inducing pathways such as those mediated by G(o) and JIP. Inhibits G(o)-alpha ATPase activity. Acts as a kinesin I membrane receptor, mediating the axonal transport of beta-secretase and presenilin 1. By acting as a kinesin I membrane receptor, plays a role in axonal anterograde transport of cargo towards synapses in axons. May be involved in copper homeostasis/oxidative stress through copper ion reduction. In vitro, copper-metallated APP induces neuronal death directly or is potentiated through Cu(2+)-mediated low-density lipoprotein oxidation. Can regulate neurite outgrowth through binding to components of the extracellular matrix such as heparin and collagen I and IV. Induces a AGER-dependent pathway that involves activation of p38 MAPK, resulting in internalization of amyloid-beta peptide and mitochondrial dysfunction in cultured cortical neurons. Provides Cu(2+) ions for GPC1 which are required for release of nitric oxide (NO) and subsequent degradation of the heparan sulfate chains on GPC1. Its function is as follows. Amyloid-beta peptides are lipophilic metal chelators with metal-reducing activity. Binds transient metals such as copper, zinc and iron. In terms of biological role, the gamma-CTF peptides as well as the caspase-cleaved peptides, including C31, are potent enhancers of neuronal apoptosis. This Saimiri sciureus (Common squirrel monkey) protein is Amyloid-beta precursor protein.